The chain runs to 347 residues: D-alanine--D-alanine ligase (347 aa).

An ATP-grasp domain is found at 131–333 (KRVLESAGIA…YPELIERLVD (203 aa)). 161-216 (EEKLAYPVFTKPSNMGSSVGISKSENQEELRQALELAFRYDSRVLVEQGVNAREIE) contacts ATP. Mg(2+) is bound by residues Asp-287, Glu-300, and Asn-302.

This sequence belongs to the D-alanine--D-alanine ligase family. The cofactor is Mg(2+). Requires Mn(2+) as cofactor.

Its subcellular location is the cytoplasm. The catalysed reaction is 2 D-alanine + ATP = D-alanyl-D-alanine + ADP + phosphate + H(+). It functions in the pathway cell wall biogenesis; peptidoglycan biosynthesis. Cell wall formation. The chain is D-alanine--D-alanine ligase from Streptococcus pneumoniae (strain CGSP14).